A 460-amino-acid polypeptide reads, in one-letter code: Serine--tRNA ligase (460 aa).

Residues 50-65 (DRNEVSSKIGELKQAG) are compositionally biased toward basic and acidic residues. Disordered stretches follow at residues 50–71 (DRNEVSSKIGELKQAGDEDAAQ) and 109–129 (PDEDAPVGDSEAENVERRREG). Residues 109–121 (PDEDAPVGDSEAE) show a composition bias toward acidic residues. Residue 241–243 (TAE) coordinates L-serine. ATP contacts are provided by residues 272 to 274 (RRE) and Val288. Glu295 provides a ligand contact to L-serine. 368-371 (EVSS) contributes to the ATP binding site. Ser404 serves as a coordination point for L-serine.

It belongs to the class-II aminoacyl-tRNA synthetase family. Type-1 seryl-tRNA synthetase subfamily. In terms of assembly, homodimer. The tRNA molecule binds across the dimer.

It localises to the cytoplasm. It catalyses the reaction tRNA(Ser) + L-serine + ATP = L-seryl-tRNA(Ser) + AMP + diphosphate + H(+). The catalysed reaction is tRNA(Sec) + L-serine + ATP = L-seryl-tRNA(Sec) + AMP + diphosphate + H(+). The protein operates within aminoacyl-tRNA biosynthesis; selenocysteinyl-tRNA(Sec) biosynthesis; L-seryl-tRNA(Sec) from L-serine and tRNA(Sec): step 1/1. Its function is as follows. Catalyzes the attachment of serine to tRNA(Ser). Is also able to aminoacylate tRNA(Sec) with serine, to form the misacylated tRNA L-seryl-tRNA(Sec), which will be further converted into selenocysteinyl-tRNA(Sec). This chain is Serine--tRNA ligase, found in Halobacterium salinarum (strain ATCC 29341 / DSM 671 / R1).